The chain runs to 158 residues: Probable cyclic pyranopterin monophosphate synthase (158 aa).

Substrate contacts are provided by residues 75–77 (MCH) and 111–112 (ME). Aspartate 126 is an active-site residue.

It belongs to the MoaC family. In terms of assembly, homohexamer; trimer of dimers.

The enzyme catalyses (8S)-3',8-cyclo-7,8-dihydroguanosine 5'-triphosphate = cyclic pyranopterin phosphate + diphosphate. It participates in cofactor biosynthesis; molybdopterin biosynthesis. Functionally, catalyzes the conversion of (8S)-3',8-cyclo-7,8-dihydroguanosine 5'-triphosphate to cyclic pyranopterin monophosphate (cPMP). This is Probable cyclic pyranopterin monophosphate synthase from Methanocorpusculum labreanum (strain ATCC 43576 / DSM 4855 / Z).